The sequence spans 566 residues: Liver carboxylesterase 1 (566 aa).

A signal peptide spans 1-18 (MWLRALVLATLAAFTAWG). A glycan (N-linked (GlcNAc...) asparagine) is linked at asparagine 79. A disulfide bridge connects residues cysteine 87 and cysteine 116. Serine 221 functions as the Acyl-ester intermediate in the catalytic mechanism. A disulfide bridge connects residues cysteine 274 and cysteine 285. Glutamate 354 acts as the Charge relay system in catalysis. Phosphoserine is present on serine 379. Residue histidine 467 is the Charge relay system of the active site.

It belongs to the type-B carboxylesterase/lipase family. As to quaternary structure, homotrimer and homohexamer. Binds to beta-glucuronidase.

The protein resides in the endoplasmic reticulum lumen. It localises to the cytoplasm. Its subcellular location is the lipid droplet. The enzyme catalyses a carboxylic ester + H2O = an alcohol + a carboxylate + H(+). The catalysed reaction is cholesteryl (9Z-octadecenoate) + H2O = cholesterol + (9Z)-octadecenoate + H(+). It carries out the reaction 2-(5Z,8Z,11Z,14Z-eicosatetraenoyl)-glycerol + H2O = glycerol + (5Z,8Z,11Z,14Z)-eicosatetraenoate + H(+). It catalyses the reaction prostaglandin E2 1-glyceryl ester + H2O = prostaglandin E2 + glycerol + H(+). The enzyme catalyses a cholesterol ester + H2O = cholesterol + a fatty acid + H(+). The catalysed reaction is prostaglandin F2alpha 1-glyceryl ester + H2O = prostaglandin F2alpha + glycerol + H(+). Its function is as follows. Involved in the detoxification of xenobiotics and in the activation of ester and amide prodrugs. Hydrolyzes aromatic and aliphatic esters, but has no catalytic activity toward amides or a fatty acyl-CoA ester. Displays fatty acid ethyl ester synthase activity, catalyzing the ethyl esterification of oleic acid to ethyloleate. Converts monoacylglycerides to free fatty acids and glycerol. Hydrolyzes of 2-arachidonoylglycerol and prostaglandins. Hydrolyzes cellular cholesteryl esters to free cholesterols and promotes reverse cholesterol transport (RCT) by facilitating both the initial and final steps in the process. First of all, allows free cholesterol efflux from macrophages to extracellular cholesterol acceptors and secondly, releases free cholesterol from lipoprotein-delivered cholesteryl esters in the liver for bile acid synthesis or direct secretion into the bile. The chain is Liver carboxylesterase 1 from Macaca fascicularis (Crab-eating macaque).